The sequence spans 303 residues: Probable cell division protein WhiA (303 aa).

Residues 272-303 constitute a DNA-binding region (H-T-H motif); it reads SIQQIADSLAVPLTKSGVNHRLRKINKIAEDL.

It belongs to the WhiA family.

In terms of biological role, involved in cell division and chromosome segregation. The polypeptide is Probable cell division protein WhiA (Streptococcus mutans serotype c (strain ATCC 700610 / UA159)).